The following is a 398-amino-acid chain: Phosphoglycerate kinase (398 aa).

Substrate is bound by residues 24-26 (DFN), Arg-39, 62-65 (HFGR), Arg-121, and Arg-154. Residues Lys-205, Gly-296, Glu-327, and 354 to 357 (GGDS) contribute to the ATP site.

Belongs to the phosphoglycerate kinase family. In terms of assembly, monomer.

It localises to the cytoplasm. It carries out the reaction (2R)-3-phosphoglycerate + ATP = (2R)-3-phospho-glyceroyl phosphate + ADP. It functions in the pathway carbohydrate degradation; glycolysis; pyruvate from D-glyceraldehyde 3-phosphate: step 2/5. This Trichodesmium erythraeum (strain IMS101) protein is Phosphoglycerate kinase.